Here is a 667-residue protein sequence, read N- to C-terminus: Beta-galactosidase LacZ (667 aa).

Arg-109 is a substrate binding site. Cys-113 provides a ligand contact to Zn(2+). Substrate is bound at residue Asn-147. Glu-148 acts as the Proton donor in catalysis. Residues Cys-153, Cys-155, and Cys-158 each coordinate Zn(2+). Glu-307 (nucleophile) is an active-site residue. Residues Trp-315 and 355–358 contribute to the substrate site; that span reads EKFH.

Belongs to the glycosyl hydrolase 42 family.

It catalyses the reaction Hydrolysis of terminal non-reducing beta-D-galactose residues in beta-D-galactosides.. Catalyzes the hydrolysis of lactose to its constituent monosaccharides glucose and galactose. The protein is Beta-galactosidase LacZ of Lactobacillus acidophilus (strain ATCC 700396 / NCK56 / N2 / NCFM).